The sequence spans 289 residues: Homeobox protein engrailed-2 (289 aa).

Composition is skewed to basic and acidic residues over residues Met1–Ala12 and Glu60–Arg83. 2 disordered regions span residues Met1 to Pro166 and Ser179 to Ala206. Over residues Val96 to Gly114 the composition is skewed to gly residues. Over residues Leu142 to Ser160 the composition is skewed to low complexity. The segment at residues Asp200–Thr259 is a DNA-binding region (homeobox).

It belongs to the engrailed homeobox family.

It localises to the nucleus. This is Homeobox protein engrailed-2 (EN2) from Gallus gallus (Chicken).